A 380-amino-acid polypeptide reads, in one-letter code: 4-hydroxy-3-methylbut-2-en-1-yl diphosphate synthase (flavodoxin) (380 aa).

Positions 280, 283, 315, and 322 each coordinate [4Fe-4S] cluster.

This sequence belongs to the IspG family. [4Fe-4S] cluster is required as a cofactor.

The enzyme catalyses (2E)-4-hydroxy-3-methylbut-2-enyl diphosphate + oxidized [flavodoxin] + H2O + 2 H(+) = 2-C-methyl-D-erythritol 2,4-cyclic diphosphate + reduced [flavodoxin]. It functions in the pathway isoprenoid biosynthesis; isopentenyl diphosphate biosynthesis via DXP pathway; isopentenyl diphosphate from 1-deoxy-D-xylulose 5-phosphate: step 5/6. Its function is as follows. Converts 2C-methyl-D-erythritol 2,4-cyclodiphosphate (ME-2,4cPP) into 1-hydroxy-2-methyl-2-(E)-butenyl 4-diphosphate. This is 4-hydroxy-3-methylbut-2-en-1-yl diphosphate synthase (flavodoxin) from Cutibacterium acnes (strain DSM 16379 / KPA171202) (Propionibacterium acnes).